A 99-amino-acid polypeptide reads, in one-letter code: MRIGVVGDPDVVAGFRLAGLTDVYEVNSPEQAAKAIEELNSNSEIGLIITTERIGEKIRDAISSIKKVVVEVPDKNGPIVRENDPVKVLVRNAVGVDIK.

Belongs to the V-ATPase F subunit family. Has multiple subunits with at least A(3), B(3), C, D, E, F, H, I and proteolipid K(x).

It localises to the cell membrane. In terms of biological role, component of the A-type ATP synthase that produces ATP from ADP in the presence of a proton gradient across the membrane. The polypeptide is A-type ATP synthase subunit F (Methanococcus maripaludis (strain DSM 14266 / JCM 13030 / NBRC 101832 / S2 / LL)).